A 448-amino-acid polypeptide reads, in one-letter code: Cytoplasmic tRNA 2-thiolation protein 2 (448 aa).

It belongs to the CTU2/NCS2 family.

It localises to the cytoplasm. The protein operates within tRNA modification; 5-methoxycarbonylmethyl-2-thiouridine-tRNA biosynthesis. In terms of biological role, plays a central role in 2-thiolation of mcm(5)S(2)U at tRNA wobble positions of tRNA(Lys), tRNA(Glu) and tRNA(Gln). May act by forming a heterodimer with NCS6 that ligates sulfur from thiocarboxylated URM1 onto the uridine of tRNAs at wobble position. Prior mcm(5) tRNA modification by the elongator complex is required for 2-thiolation. May also be involved in protein urmylation. The polypeptide is Cytoplasmic tRNA 2-thiolation protein 2 (Lodderomyces elongisporus (strain ATCC 11503 / CBS 2605 / JCM 1781 / NBRC 1676 / NRRL YB-4239) (Yeast)).